Consider the following 690-residue polypeptide: DNA ligase (690 aa).

NAD(+) is bound by residues 43–47, 92–93, and Glu-129; these read DAEYD and SI. The N6-AMP-lysine intermediate role is filled by Lys-131. NAD(+) is bound by residues Arg-152, Glu-188, Lys-309, and Lys-333. Zn(2+) is bound by residues Cys-427, Cys-430, Cys-445, and Cys-451. Positions 610–690 constitute a BRCT domain; the sequence is VTPTPLSGKT…GLKELLDGHS (81 aa).

Belongs to the NAD-dependent DNA ligase family. LigA subfamily. It depends on Mg(2+) as a cofactor. Mn(2+) is required as a cofactor.

The enzyme catalyses NAD(+) + (deoxyribonucleotide)n-3'-hydroxyl + 5'-phospho-(deoxyribonucleotide)m = (deoxyribonucleotide)n+m + AMP + beta-nicotinamide D-nucleotide.. Its function is as follows. DNA ligase that catalyzes the formation of phosphodiester linkages between 5'-phosphoryl and 3'-hydroxyl groups in double-stranded DNA using NAD as a coenzyme and as the energy source for the reaction. It is essential for DNA replication and repair of damaged DNA. The sequence is that of DNA ligase from Albidiferax ferrireducens (strain ATCC BAA-621 / DSM 15236 / T118) (Rhodoferax ferrireducens).